The chain runs to 842 residues: Molybdenum cofactor sulfurase (842 aa).

Lysine 236 bears the N6-(pyridoxal phosphate)lysine mark. The active site involves cysteine 402. Positions 637-680 (PGSQHGDAQRSSKARLQKHQITTDQESDVQEVHPGSGTTTDSTW) are disordered. The 169-residue stretch at 663-831 (SDVQEVHPGS…AARGDVAYPT (169 aa)) folds into the MOSC domain.

It belongs to the class-V pyridoxal-phosphate-dependent aminotransferase family. MOCOS subfamily. The cofactor is pyridoxal 5'-phosphate.

It catalyses the reaction Mo-molybdopterin + L-cysteine + AH2 = thio-Mo-molybdopterin + L-alanine + A + H2O. The protein operates within cofactor biosynthesis; molybdopterin biosynthesis. Functionally, sulfurates the molybdenum cofactor. Sulfation of molybdenum is essential for xanthine dehydrogenase (XDH) and aldehyde oxidase (ADO) enzymes in which molybdenum cofactor is liganded by 1 oxygen and 1 sulfur atom in active form. This Pyricularia oryzae (strain 70-15 / ATCC MYA-4617 / FGSC 8958) (Rice blast fungus) protein is Molybdenum cofactor sulfurase.